We begin with the raw amino-acid sequence, 272 residues long: Expansin-B16 (272 aa).

A signal peptide spans 1–25; sequence MAAFSSSSSAPMLIRSVLFVSLLSA. Residues 63–173 enclose the Expansin-like EG45 domain; it reads GGACGYGTLV…RRTACKYGGK (111 aa). Disulfide bonds link cysteine 66–cysteine 95, cysteine 98–cysteine 168, and cysteine 103–cysteine 109. The region spanning 186 to 267 is the Expansin-like CBD domain; that stretch reads FWLSLLVEFE…NWTPKATYTS (82 aa).

This sequence belongs to the expansin family. Expansin B subfamily.

It localises to the secreted. The protein resides in the cell wall. Its subcellular location is the membrane. Functionally, may cause loosening and extension of plant cell walls by disrupting non-covalent bonding between cellulose microfibrils and matrix glucans. No enzymatic activity has been found. May be required for rapid internodal elongation in deepwater rice during submergence. This Oryza sativa subsp. japonica (Rice) protein is Expansin-B16 (EXPB16).